We begin with the raw amino-acid sequence, 237 residues long: Protein YIPF4 (237 aa).

Residues 1–106 (MQFSPTNGDF…FNRQVVRDNP (106 aa)) are Cytoplasmic-facing. The chain crosses the membrane as a helical span at residues 107 to 127 (DFWGPLAVVLLFSMISIYGQF). Residues 128 to 131 (RVVS) lie on the Lumenal side of the membrane. Residues 132 to 152 (WIITIWIFGSLTIFLLARVLG) traverse the membrane as a helical segment. Topologically, residues 153 to 160 (GEVSYGQV) are cytoplasmic. The helical transmembrane segment at 161-181 (LGVIGYSLLPLIVIAPLLLVI) threads the bilayer. The Lumenal segment spans residues 182 to 188 (GGFEVVS). The chain crosses the membrane as a helical span at residues 189–209 (TLIKLFGVFWAAYSAASLLVG). Residues 210–216 (DEFKTKK) are Cytoplasmic-facing. A helical transmembrane segment spans residues 217–237 (PLLIYPIFLLYIYFLSLYTGV).

It belongs to the YIP1 family.

The protein resides in the golgi apparatus. Its subcellular location is the cis-Golgi network membrane. Involved in the maintenance of the Golgi structure. The protein is Protein YIPF4 (yipf4) of Danio rerio (Zebrafish).